Here is a 761-residue protein sequence, read N- to C-terminus: ARF GTPase-activating protein GIT1 (761 aa).

In terms of domain architecture, Arf-GAP spans 1–124; sequence MSRKGPRAEV…AFVHKLPCRD (124 aa). Residues 1–124 are interaction with gamma-tubulin and localization to the centrosome; sequence MSRKGPRAEV…AFVHKLPCRD (124 aa). Residues 11 to 34 form a C4-type zinc finger; sequence CADCSAPDPGWASISRGVLVCDEC. 3 ANK repeats span residues 132-161, 166-195, and 199-228; these read DLSK…QANF, KGTT…DPGS, and NGRT…ELTD. Tyrosine 224 bears the Phosphotyrosine mark. The tract at residues 245–365 is interaction with PCLO; that stretch reads HYIIPQMADS…QGKSLSSPTD (121 aa). An interaction with PTK2/FAK1 region spans residues 253-415; that stretch reads DSLDLSELAK…NRARSMDSSD (163 aa). The tract at residues 254–367 is interaction with ARHGEF7; that stretch reads SLDLSELAKA…KSLSSPTDNL (114 aa). The segment at 354-416 is disordered; the sequence is RQQGKSLSSP…RARSMDSSDL (63 aa). A compositionally biased stretch (polar residues) spans 357-374; sequence GKSLSSPTDNLELSLRSQ. Phosphoserine occurs at positions 359 and 362. Threonine 364 bears the Phosphothreonine mark. Residues 366-587 are interaction with NCK2 and GRIN3A; that stretch reads NLELSLRSQS…QEGSRHTSKL (222 aa). Residues 366–587 are required for localization at synapses; it reads NLELSLRSQS…QEGSRHTSKL (222 aa). Phosphoserine occurs at positions 370 and 375. Phosphotyrosine is present on tyrosine 383. Serine 385 and serine 388 each carry phosphoserine. Residues 385 to 394 show a composition bias toward acidic residues; sequence SVASDEDTDQ. Phosphothreonine is present on threonine 392. Residues serine 410, serine 413, and serine 417 each carry the phosphoserine modification. The interval 411–466 is interaction with MAPK1; it reads MDSSDLSDGAVTLQEYLELKKALATSEAKVQQLMKVNSSLSDELRRLQREIHKLQA. An interaction with IKBKG region spans residues 420–620; it reads AVTLQEYLEL…EGKRFLELGK (201 aa). Residues 440–474 are a coiled coil; sequence VQQLMKVNSSLSDELRRLQREIHKLQAENLQLRQP. Residues 471 to 501 are disordered; the sequence is LRQPPGPVPTPPLPSERAEHTPMAPGGSTHR. Residues 474-484 are compositionally biased toward pro residues; the sequence is PPGPVPTPPLP. The residue at position 480 (threonine 480) is a Phosphothreonine. Phosphoserine occurs at positions 498 and 536. Residue threonine 537 is modified to Phosphothreonine. Phosphotyrosine occurs at positions 545 and 554. 4 positions are modified to phosphoserine: serine 561, serine 571, serine 592, and serine 596. A disordered region spans residues 572–606; it reads PLLSCSQEGSRHTSKLSRHGSGADSDYENTQSGDP. Threonine 601 carries the post-translational modification Phosphothreonine. A Phosphoserine modification is found at serine 630. The interaction with PXN and TGFB1I1 stretch occupies residues 637–761; sequence PGLPSTEDVI…VTITTREKKQ (125 aa).

As to quaternary structure, forms homodimers and possibly oligomers. May forms heterooligomers with GIT2. Interacts with G protein-coupled receptor kinases, including GRK2, GRK3, GRK5 and GRK6. Interacts with PPFIA1, PPFIA2 and PPFIA4. Interacts with GRIP1 and forms a ternary complex with PPFIA1 and GRIP1. Directly interacts with ARHGEF7/beta-PIX, forming in vitro a heptameric complex made of a GIT1 dimer and an ARHGEF7 trimer. Directly interacts with PXN/paxillin; this interaction is enhanced in the presence of ARHGEF7. Directly interacts (via C-terminus) with TGFB1I1/Hic-5 (via LD motif 3). Directly interacts with PTK2/FAK1. May interact with PTK2B/PYK2; this interaction may be indirect. Interacts with AMPA receptors GRIA2/3. Directly interacts with protein Piccolo/PCLO. Forms a complex with Ephrin-B1/EFNB1 and NCK2/GRB4 (via SH2); this interaction is important for spine morphogenesis and synapse formation. Interaction with NCK2 is transient and depends upon GIT1 phosphorylation at Tyr-383. Interacts with GRIN3A/GluN3A (via C-terminus); this interaction competes with GIT1 interaction with ARHGEF7 and limits synaptic localization of GIT1. Interacts with IKBKG/NEMO in resting bone mesenchymal stem cells, as well as in TNF-stimulated cells; this interaction may increase IKBKG affinity for 'Lys-63'-linked polyubiquitin chains. Interacts with GABA(A) receptors, including GABRB3 and GABRG2. Interacts with SCRIB. Interacts (via N- and C-terminus) with ENTR1/SDCCAG3 (via N-terminus); this interaction is direct. May form a tripartite complex with ENTR1 and PTPN13. Interacts with YWHAZ. Interacts with PAK1. Interacts with PAK3. Directly interacts (via N-terminus) with gamma-tubulin. Interacts with MAPK1 and MAPK3; this interaction is required for MAPK1/3 recruitment to focal adhesions. Post-translationally, phosphorylated by PAK1. Phosphorylation on tyrosine residues may be catalyzed by PTK2/FAK1 and SRC in growing fibroblasts. Phosphorylation at Tyr-383 is induced by activation of Ephrin-B1/EFNB1 and catalyzed by SRC family kinases. It is required for the interaction with NCK2 and for GIT1 recruitment to synapses in hippocampal neurons.

The protein resides in the cytoplasm. It localises to the synapse. Its subcellular location is the presynapse. It is found in the postsynapse. The protein localises to the postsynaptic density. The protein resides in the cell junction. It localises to the focal adhesion. Its subcellular location is the cell projection. It is found in the lamellipodium. The protein localises to the cytoskeleton. The protein resides in the microtubule organizing center. It localises to the centrosome. Its subcellular location is the spindle pole. Functionally, GTPase-activating protein for ADP ribosylation factor family members, including ARF1. Multidomain scaffold protein that interacts with numerous proteins and therefore participates in many cellular functions, including receptor internalization, focal adhesion remodeling, and signaling by both G protein-coupled receptors and tyrosine kinase receptors. Through PAK1 activation, positively regulates microtubule nucleation during interphase. Plays a role in the regulation of cytokinesis; for this function, may act in a pathway also involving ENTR1 and PTPN13. May promote cell motility both by regulating focal complex dynamics and by local activation of RAC1. May act as scaffold for MAPK1/3 signal transduction in focal adhesions. Recruits MAPK1/3/ERK1/2 to focal adhesions after EGF stimulation via a Src-dependent pathway, hence stimulating cell migration. Plays a role in brain development and function. Involved in the regulation of spine density and synaptic plasticity that is required for processes involved in learning. Plays an important role in dendritic spine morphogenesis and synapse formation. In hippocampal neurons, recruits guanine nucleotide exchange factors (GEFs), such as ARHGEF7/beta-PIX, to the synaptic membrane. These in turn locally activate RAC1, which is an essential step for spine morphogenesis and synapse formation. May contribute to the organization of presynaptic active zones through oligomerization and formation of a Piccolo/PCLO-based protein network, which includes ARHGEF7/beta-PIX and FAK1. In neurons, through its interaction with liprin-alpha family members, may be required for AMPA receptor (GRIA2/3) proper targeting to the cell membrane. In complex with GABA(A) receptors and ARHGEF7, plays a crucial role in regulating GABA(A) receptor synaptic stability, maintaining GPHN/gephyrin scaffolds and hence GABAergic inhibitory synaptic transmission, by locally coordinating RAC1 and PAK1 downstream effector activity, leading to F-actin stabilization. May also be important for RAC1 downstream signaling pathway through PAK3 and regulation of neuronal inhibitory transmission at presynaptic input. Required for successful bone regeneration during fracture healing. The function in intramembranous ossification may, at least partly, exerted by macrophages in which GIT1 is a key negative regulator of redox homeostasis, IL1B production, and glycolysis, acting through the ERK1/2/NRF2/NFE2L2 axis. May play a role in angiogenesis during fracture healing. In this process, may regulate activation of the canonical NF-kappa-B signal in bone mesenchymal stem cells by enhancing the interaction between NEMO and 'Lys-63'-ubiquitinated RIPK1/RIP1, eventually leading to enhanced production of VEGFA and others angiogenic factors. Essential for VEGF signaling through the activation of phospholipase C-gamma and ERK1/2, hence may control endothelial cell proliferation and angiogenesis. The polypeptide is ARF GTPase-activating protein GIT1 (GIT1) (Homo sapiens (Human)).